Consider the following 304-residue polypeptide: Serine/threonine-protein phosphatase PP1 isozyme 3 (304 aa).

Mn(2+) contacts are provided by Asp61, His63, Asp89, and Asn121. Residue His122 is the Proton donor of the active site. Mn(2+)-binding residues include His170 and His245.

Belongs to the PPP phosphatase family. PP-1 subfamily. The cofactor is Mn(2+).

The catalysed reaction is O-phospho-L-seryl-[protein] + H2O = L-seryl-[protein] + phosphate. The enzyme catalyses O-phospho-L-threonyl-[protein] + H2O = L-threonyl-[protein] + phosphate. The chain is Serine/threonine-protein phosphatase PP1 isozyme 3 (NPP3) from Nicotiana tabacum (Common tobacco).